The following is a 174-amino-acid chain: Ribosome maturation factor RimM (174 aa).

Residues P96–L170 form the PRC barrel domain.

It belongs to the RimM family. In terms of assembly, binds ribosomal protein uS19.

It localises to the cytoplasm. Its function is as follows. An accessory protein needed during the final step in the assembly of 30S ribosomal subunit, possibly for assembly of the head region. Essential for efficient processing of 16S rRNA. May be needed both before and after RbfA during the maturation of 16S rRNA. It has affinity for free ribosomal 30S subunits but not for 70S ribosomes. This chain is Ribosome maturation factor RimM, found in Nocardia farcinica (strain IFM 10152).